The sequence spans 178 residues: ATP synthase subunit delta (178 aa).

Belongs to the ATPase delta chain family. In terms of assembly, F-type ATPases have 2 components, F(1) - the catalytic core - and F(0) - the membrane proton channel. F(1) has five subunits: alpha(3), beta(3), gamma(1), delta(1), epsilon(1). F(0) has three main subunits: a(1), b(2) and c(10-14). The alpha and beta chains form an alternating ring which encloses part of the gamma chain. F(1) is attached to F(0) by a central stalk formed by the gamma and epsilon chains, while a peripheral stalk is formed by the delta and b chains.

The protein resides in the cell inner membrane. F(1)F(0) ATP synthase produces ATP from ADP in the presence of a proton or sodium gradient. F-type ATPases consist of two structural domains, F(1) containing the extramembraneous catalytic core and F(0) containing the membrane proton channel, linked together by a central stalk and a peripheral stalk. During catalysis, ATP synthesis in the catalytic domain of F(1) is coupled via a rotary mechanism of the central stalk subunits to proton translocation. Functionally, this protein is part of the stalk that links CF(0) to CF(1). It either transmits conformational changes from CF(0) to CF(1) or is implicated in proton conduction. This is ATP synthase subunit delta from Pseudomonas fluorescens (strain ATCC BAA-477 / NRRL B-23932 / Pf-5).